Consider the following 190-residue polypeptide: Adenine phosphoribosyltransferase (190 aa).

It belongs to the purine/pyrimidine phosphoribosyltransferase family. Homodimer.

It is found in the cytoplasm. It carries out the reaction AMP + diphosphate = 5-phospho-alpha-D-ribose 1-diphosphate + adenine. It functions in the pathway purine metabolism; AMP biosynthesis via salvage pathway; AMP from adenine: step 1/1. Catalyzes a salvage reaction resulting in the formation of AMP, that is energically less costly than de novo synthesis. In Cupriavidus taiwanensis (strain DSM 17343 / BCRC 17206 / CCUG 44338 / CIP 107171 / LMG 19424 / R1) (Ralstonia taiwanensis (strain LMG 19424)), this protein is Adenine phosphoribosyltransferase.